The sequence spans 245 residues: MANEANPCPCDIGHRLDYGGMGQEVQVEHIKAYVTRSPVDAGKAVIVVQDIFGWQLSNTRYMADMIAGNGYTTIVPDFFVGQEPWDPAGDWSTFPEWLKSRNARKINREVDAVLRYLKQQCHAQKIGIVGFCWGGIVVHHVMTTYPEVRAGVSVYGIIRDSEDVYNLKNPTLFIFAENDAVIPLEQVSILIQKLKEHCIVNYQVKTFSGQTHGFVHRKREDCSPADKPYIEEARRNLIEWLNKYI.

Ala2 bears the N-acetylalanine mark. Active-site residues include Cys132, Asp179, and His212. A Phosphoserine modification is found at Ser223.

It belongs to the dienelactone hydrolase family.

It localises to the cytoplasm. The protein localises to the cytosol. In terms of biological role, cysteine hydrolase. The chain is Carboxymethylenebutenolidase homolog (Cmbl) from Rattus norvegicus (Rat).